We begin with the raw amino-acid sequence, 354 residues long: MTELKNDRYLRALLKQDVDKTPVWMMRQAGRYLPEYKKVRAQAGDFMSLCRNADLACEVTLQPLRRFDLDAAILFSDILTIPDAMGLGLYFAEGEGPKLKRPITCKKDVDNLIMPDPEGELQYVMNAVRTIRRELKGSVPLIGFAGSPWTLATYMVEGGSSKAFTKIKKMAFCEPQLLHTLLDKLADSVIDYLNAQIAAGAQSVMVFDTWGGVLSPRDYKDFSLQYMTKIVAGLQRSYEGQKIPVTLFTKNGGQWLEAIADTGCDAIGLDWTIDMASAKARVGDRVVLQGNMDPSMLYATPERIRQEVATILASFGKGNGHVFNLGHGIHLDVPPENGKVFVDAVHELSMPYHV.

Substrate-binding positions include 27 to 31 (RQAGR), Asp-77, Tyr-154, Thr-209, and His-327.

This sequence belongs to the uroporphyrinogen decarboxylase family. As to quaternary structure, homodimer.

The protein resides in the cytoplasm. The enzyme catalyses uroporphyrinogen III + 4 H(+) = coproporphyrinogen III + 4 CO2. It participates in porphyrin-containing compound metabolism; protoporphyrin-IX biosynthesis; coproporphyrinogen-III from 5-aminolevulinate: step 4/4. Functionally, catalyzes the decarboxylation of four acetate groups of uroporphyrinogen-III to yield coproporphyrinogen-III. The chain is Uroporphyrinogen decarboxylase from Psychromonas ingrahamii (strain DSM 17664 / CCUG 51855 / 37).